The sequence spans 208 residues: Interleukin-6 (208 aa).

Residues 1 to 27 (MTFLSTSAFSPLAFSLGLLLVVATAFP) form the signal peptide. Cys-68 and Cys-74 are joined by a disulfide. Position 77 is a phosphoserine (Ser-77). A disulfide bond links Cys-97 and Cys-107.

It belongs to the IL-6 superfamily. In terms of assembly, component of a hexamer of two molecules each of IL6, IL6R and IL6ST; first binds to IL6R to associate with the signaling subunit IL6ST. Interacts with IL6R (via the N-terminal ectodomain); this interaction may be affected by IL6R-binding with SORL1, hence decreasing IL6 cis signaling. Interacts with SORL1 (via the N-terminal ectodomain); this interaction leads to IL6 internalization and lysosomal degradation. May form a trimeric complex with the soluble SORL1 ectodomain and soluble IL6R receptor; this interaction might stabilize circulating IL6, hence promoting IL6 trans signaling.

The protein localises to the secreted. Cytokine with a wide variety of biological functions in immunity, tissue regeneration, and metabolism. Binds to IL6R, then the complex associates to the signaling subunit IL6ST/gp130 to trigger the intracellular IL6-signaling pathway. The interaction with the membrane-bound IL6R and IL6ST stimulates 'classic signaling', whereas the binding of IL6 and soluble IL6R to IL6ST stimulates 'trans-signaling'. Alternatively, 'cluster signaling' occurs when membrane-bound IL6:IL6R complexes on transmitter cells activate IL6ST receptors on neighboring receiver cells. Its function is as follows. IL6 is a potent inducer of the acute phase response. Rapid production of IL6 contributes to host defense during infection and tissue injury, but excessive IL6 synthesis is involved in disease pathology. In the innate immune response, is synthesized by myeloid cells, such as macrophages and dendritic cells, upon recognition of pathogens through toll-like receptors (TLRs) at the site of infection or tissue injury. In the adaptive immune response, is required for the differentiation of B cells into immunoglobulin-secreting cells. Plays a major role in the differentiation of CD4(+) T cell subsets. Essential factor for the development of T follicular helper (Tfh) cells that are required for the induction of germinal-center formation. Required to drive naive CD4(+) T cells to the Th17 lineage. Also required for proliferation of myeloma cells and the survival of plasmablast cells. Functionally, acts as an essential factor in bone homeostasis and on vessels directly or indirectly by induction of VEGF, resulting in increased angiogenesis activity and vascular permeability. Induces, through 'trans-signaling' and synergistically with IL1B and TNF, the production of VEGF. Involved in metabolic controls, is discharged into the bloodstream after muscle contraction increasing lipolysis and improving insulin resistance. 'Trans-signaling' in central nervous system also regulates energy and glucose homeostasis. Mediates, through GLP-1, crosstalk between insulin-sensitive tissues, intestinal L cells and pancreatic islets to adapt to changes in insulin demand. Also acts as a myokine. Plays a protective role during liver injury, being required for maintenance of tissue regeneration. Also has a pivotal role in iron metabolism by regulating HAMP/hepcidin expression upon inflammation or bacterial infection. Through activation of IL6ST-YAP-NOTCH pathway, induces inflammation-induced epithelial regeneration. The chain is Interleukin-6 (IL6) from Felis catus (Cat).